The primary structure comprises 180 residues: Translation initiation factor IF-3 (180 aa).

This sequence belongs to the IF-3 family. In terms of assembly, monomer.

The protein localises to the cytoplasm. In terms of biological role, IF-3 binds to the 30S ribosomal subunit and shifts the equilibrium between 70S ribosomes and their 50S and 30S subunits in favor of the free subunits, thus enhancing the availability of 30S subunits on which protein synthesis initiation begins. This chain is Translation initiation factor IF-3, found in Pectobacterium atrosepticum (strain SCRI 1043 / ATCC BAA-672) (Erwinia carotovora subsp. atroseptica).